Consider the following 393-residue polypeptide: 1-deoxy-D-xylulose 5-phosphate reductoisomerase (393 aa).

The NADPH site is built by Thr-10, Gly-11, Ser-12, Ile-13, Gln-38, and Asn-124. 1-deoxy-D-xylulose 5-phosphate is bound at residue Lys-125. Residue Glu-126 participates in NADPH binding. Asp-150 serves as a coordination point for Mn(2+). Positions 151, 152, 179, and 202 each coordinate 1-deoxy-D-xylulose 5-phosphate. Glu-152 is a binding site for Mn(2+). Gly-208 is an NADPH binding site. 1-deoxy-D-xylulose 5-phosphate contacts are provided by Ser-215, Asn-220, Lys-221, and Glu-224. Glu-224 provides a ligand contact to Mn(2+).

It belongs to the DXR family. The cofactor is Mg(2+). Mn(2+) is required as a cofactor.

The catalysed reaction is 2-C-methyl-D-erythritol 4-phosphate + NADP(+) = 1-deoxy-D-xylulose 5-phosphate + NADPH + H(+). It participates in isoprenoid biosynthesis; isopentenyl diphosphate biosynthesis via DXP pathway; isopentenyl diphosphate from 1-deoxy-D-xylulose 5-phosphate: step 1/6. Functionally, catalyzes the NADPH-dependent rearrangement and reduction of 1-deoxy-D-xylulose-5-phosphate (DXP) to 2-C-methyl-D-erythritol 4-phosphate (MEP). This is 1-deoxy-D-xylulose 5-phosphate reductoisomerase from Ralstonia nicotianae (strain ATCC BAA-1114 / GMI1000) (Ralstonia solanacearum).